Consider the following 228-residue polypeptide: Ribulose-phosphate 3-epimerase-like protein 1 (228 aa).

A substrate-binding site is contributed by Ser10. A divalent metal cation contacts are provided by His35, Asp37, and His70. The active-site Proton acceptor is Asp37. Substrate is bound by residues His70, 146–149 (GFGE), 175–177 (DGG), and 197–198 (GS). Residue Asp175 participates in a divalent metal cation binding. Residue Asp175 is the Proton donor of the active site.

This sequence belongs to the ribulose-phosphate 3-epimerase family. As to quaternary structure, homodimer. Fe(2+) is required as a cofactor. It depends on Mn(2+) as a cofactor. Zn(2+) serves as cofactor. Requires Co(2+) as cofactor.

It carries out the reaction D-ribulose 5-phosphate = D-xylulose 5-phosphate. The protein operates within carbohydrate degradation. In terms of biological role, catalyzes the reversible epimerization of D-ribulose 5-phosphate to D-xylulose 5-phosphate. The sequence is that of Ribulose-phosphate 3-epimerase-like protein 1 (RPEL1) from Homo sapiens (Human).